We begin with the raw amino-acid sequence, 100 residues long: Large ribosomal subunit protein uL23 (100 aa).

It belongs to the universal ribosomal protein uL23 family. As to quaternary structure, part of the 50S ribosomal subunit. Contacts protein L29, and trigger factor when it is bound to the ribosome.

Functionally, one of the early assembly proteins it binds 23S rRNA. One of the proteins that surrounds the polypeptide exit tunnel on the outside of the ribosome. Forms the main docking site for trigger factor binding to the ribosome. This Aeromonas hydrophila subsp. hydrophila (strain ATCC 7966 / DSM 30187 / BCRC 13018 / CCUG 14551 / JCM 1027 / KCTC 2358 / NCIMB 9240 / NCTC 8049) protein is Large ribosomal subunit protein uL23.